Reading from the N-terminus, the 75-residue chain is uncharacterized protein (75 aa).

Belongs to the HSBP1 family.

This is an uncharacterized protein from Schizosaccharomyces pombe (strain 972 / ATCC 24843) (Fission yeast).